Here is a 327-residue protein sequence, read N- to C-terminus: MPVDQRPLAIAVMGPTASGKTALALEAAERWNGEIVSVDSALVYRGLEIGAAKPDAPMRAAVPHHLLDLRDPWQVYSAAEFATDARLAIAQIVARGKLPILAGGTGLYFRALLEGLSHLPEADQTVRASIAAEAQQIGWAGLHAQLARVDPVAAARIHATDPQRIQRALEVYRISGRPISAWQALPPGPRLPVRVLKVVLAPRERAVLHARIAHRLDAMLAQDFLGEVQRLRALPQMQAVAAPLDLPAVRAVGYRQAWQYLDGAGGLAEFRDKAIQATRQLAKRQLTWLRGELDARWFDPERDRHQLEDAIVGFLADRPAVRQASGV.

Position 14–21 (14–21 (GPTASGKT)) interacts with ATP. 16-21 (TASGKT) contributes to the substrate binding site. 2 interaction with substrate tRNA regions span residues 39–42 (DSAL) and 163–167 (QRIQR).

It belongs to the IPP transferase family. In terms of assembly, monomer. Mg(2+) is required as a cofactor.

It carries out the reaction adenosine(37) in tRNA + dimethylallyl diphosphate = N(6)-dimethylallyladenosine(37) in tRNA + diphosphate. Catalyzes the transfer of a dimethylallyl group onto the adenine at position 37 in tRNAs that read codons beginning with uridine, leading to the formation of N6-(dimethylallyl)adenosine (i(6)A). The polypeptide is tRNA dimethylallyltransferase (Xanthomonas euvesicatoria pv. vesicatoria (strain 85-10) (Xanthomonas campestris pv. vesicatoria)).